Consider the following 118-residue polypeptide: Putative pterin-4-alpha-carbinolamine dehydratase (118 aa).

Belongs to the pterin-4-alpha-carbinolamine dehydratase family.

It carries out the reaction (4aS,6R)-4a-hydroxy-L-erythro-5,6,7,8-tetrahydrobiopterin = (6R)-L-erythro-6,7-dihydrobiopterin + H2O. The protein is Putative pterin-4-alpha-carbinolamine dehydratase of Xanthomonas oryzae pv. oryzae (strain MAFF 311018).